An 858-amino-acid chain; its full sequence is Leucine--tRNA ligase (858 aa).

Positions 42-52 (PYPSGRLHMGH) match the 'HIGH' region motif. A 'KMSKS' region motif is present at residues 618–622 (KMSKS). Residue Lys621 coordinates ATP.

It belongs to the class-I aminoacyl-tRNA synthetase family.

It is found in the cytoplasm. It catalyses the reaction tRNA(Leu) + L-leucine + ATP = L-leucyl-tRNA(Leu) + AMP + diphosphate. This is Leucine--tRNA ligase from Aeromonas salmonicida (strain A449).